Consider the following 317-residue polypeptide: Porphobilinogen deaminase (317 aa).

Cys-245 carries the post-translational modification S-(dipyrrolylmethanemethyl)cysteine.

The protein belongs to the HMBS family. In terms of assembly, monomer. The cofactor is dipyrromethane.

The enzyme catalyses 4 porphobilinogen + H2O = hydroxymethylbilane + 4 NH4(+). It functions in the pathway porphyrin-containing compound metabolism; protoporphyrin-IX biosynthesis; coproporphyrinogen-III from 5-aminolevulinate: step 2/4. It participates in porphyrin-containing compound metabolism; chlorophyll biosynthesis. Tetrapolymerization of the monopyrrole PBG into the hydroxymethylbilane pre-uroporphyrinogen in several discrete steps. The protein is Porphobilinogen deaminase of Synechococcus sp. (strain CC9902).